A 352-amino-acid chain; its full sequence is Endophilin-A1 (352 aa).

Positions 1-21 (MSVAGLKKQFHKATQKVSEKV) are membrane-binding amphipathic helix. The tract at residues 1-27 (MSVAGLKKQFHKATQKVSEKVGGAEGT) is disordered. The interval 1–125 (MSVAGLKKQF…EVGEAMRELS (125 aa)) is binds and tubulates liposomes. Residues 18–249 (SEKVGGAEGT…LEERIRQASS (232 aa)) form the BAR domain. The tract at residues 60–87 (PNPASRAKLSMINTMSKIRGQEKGPGYP) is required for dimerization upon membrane association. Residues 181–248 (EELRQALEKF…RLEERIRQAS (68 aa)) adopt a coiled-coil conformation. Residues 245–257 (RQASSQPRREYQP) are compositionally biased toward basic and acidic residues. A disordered region spans residues 245 to 289 (RQASSQPRREYQPKPRMSLEFPTGDSTQPNGGLSHTGTPKPSGVQ). Ser-262 carries the post-translational modification Phosphoserine. Residues 268 to 283 (GDSTQPNGGLSHTGTP) show a composition bias toward polar residues. The SH3 domain occupies 290–349 (MDQPCCRALYDFEPENEGELGFKEGDIITLTNQIDENWYEGMLHGHSGFFPINYVEILVA). Tyr-299 carries the phosphotyrosine modification.

This sequence belongs to the endophilin family. As to quaternary structure, monomer; in cytoplasm. Homodimer; when associated with membranes. Interacts with OPHN1. Interacts with SYNJ1. Interacts with DNM1. Interacts with MAP4K3; the interaction appears to regulate MAP4K3-mediated JNK activation. Interacts with PDCD6IP. Interacts with ATXN2. Interacts with ADAM9 and ADAM15 cytoplasmic tails. Interacts with BIN2. Interacts with TMEM108. Interacts with ADGRB2. Brain, mostly in frontal cortex. Expressed at high level in fetal cerebellum.

Its subcellular location is the cytoplasm. It localises to the membrane. The protein localises to the early endosome. The protein resides in the presynapse. Implicated in synaptic vesicle endocytosis. May recruit other proteins to membranes with high curvature. Required for BDNF-dependent dendrite outgrowth. Cooperates with SH3GL2 to mediate BDNF-NTRK2 early endocytic trafficking and signaling from early endosomes. This chain is Endophilin-A1 (SH3GL2), found in Homo sapiens (Human).